Consider the following 370-residue polypeptide: Alpha-ketoglutarate-dependent dioxygenase cnsP (370 aa).

Residues 1–12 (MSTTTVITPGTI) are compositionally biased toward low complexity. The interval 1–20 (MSTTTVITPGTITREKNENG) is disordered. Residue His131 participates in substrate binding. Residues His169 and Asp171 each coordinate Fe cation. Residue Thr197 coordinates 2-oxoglutarate. His321 contacts Fe cation. The 2-oxoglutarate site is built by Arg333 and Arg337. Arg337 is a binding site for substrate.

This sequence belongs to the TfdA dioxygenase family. It depends on Fe(2+) as a cofactor.

Its pathway is alkaloid biosynthesis. Its function is as follows. Alpha-ketoglutarate-dependent dioxygenase; part of the gene cluster that mediates the biosynthesis of communesins, a prominent class of indole alkaloids with great potential as pharmaceuticals. Communesins are biosynthesized by the coupling of tryptamine and aurantioclavine, two building blocks derived from L-tryptophan. The L-tryptophan decarboxylase cnsB converts L-tryptophan to tryptamine, whereas the tryptophan dimethylallyltransferase cnsF converts L-tryptophan to 4-dimethylallyl tryptophan which is further transformed to aurantioclavine by the aurantioclavine synthase cnsA, probably aided by the catalase cnsD. The cytochrome P450 monooxygenase cnsC catalyzes the heterodimeric coupling between the two different indole moieties, tryptamine and aurantioclavine, to construct vicinal quaternary stereocenters and yield the heptacyclic communesin scaffold. The O-methyltransferase cnsE then methylates the communesin scaffold to produce communesin K, the simplest characterized communesin that contains the heptacyclic core. The dioxygenase cnsJ converts communesin K into communesin I. Acylation to introduce the hexadienyl group at position N16 of communesin I by the acyltransferase cnsK leads to the production of communesin B. The hexadienyl group is produced by the highly reducing polyketide synthase cnsI, before being hydrolytically removed from cnsI by the serine hydrolase cnsH, converted into hexadienyl-CoA by the CoA ligase cnsG, and then transferred to communesin I by cnsK. Surprisingly, cnsK may also be a promiscuous acyltransferase that can tolerate a range of acyl groups, including acetyl-, propionyl-, and butyryl-CoA, which lead to communesins A, G and H respectively. The roles of the alpha-ketoglutarate-dependent dioxygenases cnsM and cnsP have still to be determined. The chain is Alpha-ketoglutarate-dependent dioxygenase cnsP from Penicillium expansum (Blue mold rot fungus).